The chain runs to 199 residues: Prolactin-1 (199 aa).

Disulfide bonds link cysteine 4–cysteine 11, cysteine 58–cysteine 174, and cysteine 191–cysteine 199. Asparagine 60 carries N-linked (GlcNAc...) asparagine glycosylation.

The protein belongs to the somatotropin/prolactin family. Post-translationally, glycosylated.

Its subcellular location is the secreted. This is Prolactin-1 from Alligator mississippiensis (American alligator).